The following is a 172-amino-acid chain: Neudesin (172 aa).

The signal sequence occupies residues 1 to 31 (MVGPAPRRRLRPLAALALVLALAPGLPTARA). The region spanning 44-129 (VRLFTEEELA…KELEALDEVF (86 aa)) is the Cytochrome b5 heme-binding domain. Residue Lys136 is modified to N6-acetyllysine. Residues 151-172 (DGSPNLDFKPEDQPHFDIKDEF) form a disordered region. Residues 158 to 172 (FKPEDQPHFDIKDEF) show a composition bias toward basic and acidic residues.

Belongs to the cytochrome b5 family. MAPR subfamily. In terms of assembly, interacts with PINK1 and PARK7. As to expression, ubiquitously expressed with high expression in heart. Over-expressed in various tumors including carcinomas of the uterine cervix, lymphoma, colon, lung, skin and leukemia, as well as carcinoma of the breast.

The protein localises to the secreted. It localises to the extracellular space. It is found in the mitochondrion. Its subcellular location is the endoplasmic reticulum. Its function is as follows. Acts as a neurotrophic factor in postnatal mature neurons enhancing neuronal survival. Promotes cell proliferation and neurogenesis in undifferentiated neural progenitor cells at the embryonic stage and inhibits differentiation of astrocytes. Its neurotrophic activity is exerted via MAPK1/ERK2, MAPK3/ERK1 and AKT1/AKT pathways. Neurotrophic activity is enhanced by binding to heme. Also acts as an anorexigenic neurotrophic factor that contributes to energy balance. The polypeptide is Neudesin (Homo sapiens (Human)).